The sequence spans 154 residues: Jupiter microtubule associated homolog 1 (154 aa).

Met-1 is subject to N-acetylmethionine. The span at 1-19 (MTTTTTFKGVDPNSRNSSR) shows a compositional bias: polar residues. The tract at residues 1–154 (MTTTTTFKGV…PGGKSSLVLG (154 aa)) is disordered. Residue Thr-2 is modified to N-acetylthreonine; in Hematological and neurological expressed 1 protein, N-terminally processed. Ser-28 and Ser-31 each carry phosphoserine. Positions 47 to 59 (MASNIFGTPEENQ) are enriched in polar residues. Position 54 is a phosphothreonine (Thr-54). The segment covering 60–71 (ASWAKSAGAKSS) has biased composition (low complexity). 5 positions are modified to phosphoserine: Ser-71, Ser-80, Ser-87, Ser-88, and Ser-92. A compositionally biased stretch (polar residues) spans 80 to 91 (SGLQRRNSSEAS). The span at 96–108 (LDLKGEGDIHENV) shows a compositional bias: basic and acidic residues. Over residues 125–138 (PAAPVPSPVAPAPV) the composition is skewed to pro residues. Ser-131 is modified (phosphoserine). Lys-148 carries the post-translational modification N6-acetyllysine.

It belongs to the JUPITER family. In terms of assembly, interacts with the complex composed, at least, of APC, CTNNB1 and GSK3B; the interaction takes place with the inactive form of GSK3B (phosphorylated at 'Ser-9'). In terms of tissue distribution, expressed in testis, skeletal muscle, thymus, prostate, colon, peripheral blood cells, brain and placenta.

Its subcellular location is the nucleus. It is found in the cytoplasm. Functionally, modulates negatively AKT-mediated GSK3B signaling. Induces CTNNB1 'Ser-33' phosphorylation and degradation through the suppression of the inhibitory 'Ser-9' phosphorylation of GSK3B, which represses the function of the APC:CTNNB1:GSK3B complex and the interaction with CDH1/E-cadherin in adherent junctions. Plays a role in the regulation of cell cycle and cell adhesion. Has an inhibitory role on AR-signaling pathway through the induction of receptor proteasomal degradation. The sequence is that of Jupiter microtubule associated homolog 1 from Homo sapiens (Human).